The primary structure comprises 485 residues: Adenosylhomocysteinase (485 aa).

Positions 60, 146, and 208 each coordinate substrate. 209-211 (TTT) provides a ligand contact to NAD(+). Residues Lys238 and Asp242 each contribute to the substrate site. Residues Asn243, 272–277 (GYGDVG), Glu295, Asn330, 351–353 (IGH), and Asn399 contribute to the NAD(+) site.

Belongs to the adenosylhomocysteinase family. NAD(+) serves as cofactor.

It is found in the cytoplasm. The enzyme catalyses S-adenosyl-L-homocysteine + H2O = L-homocysteine + adenosine. The protein operates within amino-acid biosynthesis; L-homocysteine biosynthesis; L-homocysteine from S-adenosyl-L-homocysteine: step 1/1. Its function is as follows. May play a key role in the regulation of the intracellular concentration of adenosylhomocysteine. This chain is Adenosylhomocysteinase, found in Streptomyces coelicolor (strain ATCC BAA-471 / A3(2) / M145).